Here is a 94-residue protein sequence, read N- to C-terminus: C-C motif chemokine 26 (94 aa).

The N-terminal stretch at 1–23 is a signal peptide; sequence MKSFPVAFLVLLIFILSVHRGVT. Disulfide bonds link Cys33–Cys57 and Cys34–Cys73.

Belongs to the intercrine beta (chemokine CC) family. Monomer.

The protein localises to the secreted. Functionally, chemoattractant for eosinophils and basophils. Acts as a ligand for C-C chemokine receptor CCR3 which triggers Ca(2+) mobilization in eosinophils. Also acts as a ligand for CX3C chemokine receptor CX3CR1, inducing cell chemotaxis. The chain is C-C motif chemokine 26 from Canis lupus familiaris (Dog).